We begin with the raw amino-acid sequence, 31 residues long: Photosystem II reaction center protein T (31 aa).

The chain crosses the membrane as a helical span at residues 3 to 23 (ALVYTFLLISTLGIIFFGIFF).

This sequence belongs to the PsbT family. In terms of assembly, PSII is composed of 1 copy each of membrane proteins PsbA, PsbB, PsbC, PsbD, PsbE, PsbF, PsbH, PsbI, PsbJ, PsbK, PsbL, PsbM, PsbT, PsbY, PsbZ, Psb30/Ycf12, at least 3 peripheral proteins of the oxygen-evolving complex and a large number of cofactors. It forms dimeric complexes.

It is found in the plastid. The protein localises to the chloroplast thylakoid membrane. Found at the monomer-monomer interface of the photosystem II (PS II) dimer, plays a role in assembly and dimerization of PSII. PSII is a light-driven water plastoquinone oxidoreductase, using light energy to abstract electrons from H(2)O, generating a proton gradient subsequently used for ATP formation. This chain is Photosystem II reaction center protein T, found in Nephroselmis olivacea (Green alga).